The following is a 282-amino-acid chain: Energy-coupling factor transporter ATP-binding protein EcfA1 (282 aa).

An ABC transporter domain is found at 6-243 (ISFDHVTFTY…VEMLKRIGLD (238 aa)). Position 40 to 47 (40 to 47 (GHNGSGKS)) interacts with ATP.

This sequence belongs to the ABC transporter superfamily. Energy-coupling factor EcfA family. Forms a stable energy-coupling factor (ECF) transporter complex composed of 2 membrane-embedded substrate-binding proteins (S component), 2 ATP-binding proteins (A component) and 2 transmembrane proteins (T component).

The protein localises to the cell membrane. In terms of biological role, ATP-binding (A) component of a common energy-coupling factor (ECF) ABC-transporter complex. Unlike classic ABC transporters this ECF transporter provides the energy necessary to transport a number of different substrates. In Lactobacillus delbrueckii subsp. bulgaricus (strain ATCC 11842 / DSM 20081 / BCRC 10696 / JCM 1002 / NBRC 13953 / NCIMB 11778 / NCTC 12712 / WDCM 00102 / Lb 14), this protein is Energy-coupling factor transporter ATP-binding protein EcfA1.